The following is a 135-amino-acid chain: Large ribosomal subunit protein bL19 (135 aa).

The protein belongs to the bacterial ribosomal protein bL19 family.

Its function is as follows. This protein is located at the 30S-50S ribosomal subunit interface and may play a role in the structure and function of the aminoacyl-tRNA binding site. The sequence is that of Large ribosomal subunit protein bL19 from Xanthomonas euvesicatoria pv. vesicatoria (strain 85-10) (Xanthomonas campestris pv. vesicatoria).